The chain runs to 291 residues: Small ribosomal subunit protein uS2 (291 aa).

This sequence belongs to the universal ribosomal protein uS2 family.

In Orientia tsutsugamushi (strain Boryong) (Rickettsia tsutsugamushi), this protein is Small ribosomal subunit protein uS2.